The chain runs to 157 residues: Ribosome maturation factor RimP (157 aa).

It belongs to the RimP family.

It localises to the cytoplasm. Required for maturation of 30S ribosomal subunits. The protein is Ribosome maturation factor RimP of Streptococcus thermophilus (strain ATCC BAA-491 / LMD-9).